We begin with the raw amino-acid sequence, 600 residues long: MRLSQMLFVTLREDPAEAEIPSHKLLLRAGYIRRVGSGIYAYLPLMWRVLQKVSQIVREEMDAAGAQECLLPQIQPAELWQESGRWDTYTQAEGIMFALQDRQDRELGLGPTHEEVITAVARDMIRSYRQLPLNLYQIQTKFRDEIRPRFGLMRGREFIMKDAYSFSTDEADLKIIYSKMHDAYCNILQRSGLAYRAVDADSGAIGGSGSQEFMVLAEAGEDEVLYTDDGKYAANVEKAVSRPADAQPSSFKSVEKKETPKTDTIAKLCDCLQCSPTQVVKTVLYEAVYDNGQTLLALVSLRGDQSVNEVKLQNELVQLGDVVKGKALIALTVAEGGTKWASQPLPLGYIAPDLADSYIQKSKQVHGKFVRLVDQTAVDLKNFVTGANEVGIHQVGVNWKTDIPLPKHVVDIRTAQVGDRAVHDPKQTLQTARGIEIGHIFQLGTKYSQALGATYTNEAGKEQPLVMGCYGVGVSRLAQAAVEQSYDKDGIVWPVAIAPYHAIIIIPNGKDSDQVEAAEKLYSELNAAGIETLLDDRTERAGVKFKDADLIGIPYRIVTGRSLKEGNVEMVERATHDAHQIALDQVLPTLKEYLAKAIST.

Belongs to the class-II aminoacyl-tRNA synthetase family. ProS type 1 subfamily. As to quaternary structure, homodimer.

It localises to the cytoplasm. The enzyme catalyses tRNA(Pro) + L-proline + ATP = L-prolyl-tRNA(Pro) + AMP + diphosphate. Catalyzes the attachment of proline to tRNA(Pro) in a two-step reaction: proline is first activated by ATP to form Pro-AMP and then transferred to the acceptor end of tRNA(Pro). As ProRS can inadvertently accommodate and process non-cognate amino acids such as alanine and cysteine, to avoid such errors it has two additional distinct editing activities against alanine. One activity is designated as 'pretransfer' editing and involves the tRNA(Pro)-independent hydrolysis of activated Ala-AMP. The other activity is designated 'posttransfer' editing and involves deacylation of mischarged Ala-tRNA(Pro). The misacylated Cys-tRNA(Pro) is not edited by ProRS. In Acaryochloris marina (strain MBIC 11017), this protein is Proline--tRNA ligase.